Reading from the N-terminus, the 302-residue chain is 5'-3' exonuclease (302 aa).

The 5'-3' exonuclease domain occupies 173–269 (IPKLIPDLLG…NITTKKIKML (97 aa)).

Functionally, 5'-3' exonuclease acting preferentially on double-stranded DNA. In Buchnera aphidicola subsp. Baizongia pistaciae (strain Bp), this protein is 5'-3' exonuclease (pol).